We begin with the raw amino-acid sequence, 192 residues long: Erythropoietin (192 aa).

The signal sequence occupies residues Met1–Gly26. 2 disulfides stabilise this stretch: Cys33–Cys187 and Cys55–Cys59. Asn50 is a glycosylation site (N-linked (GlcNAc...) asparagine). N-linked (GlcNAc...) asparagine glycosylation is found at Asn64 and Asn109.

Belongs to the EPO/TPO family. As to expression, produced by kidney or liver of adult mammals and by liver of fetal or neonatal mammals.

It is found in the secreted. Functionally, hormone involved in the regulation of erythrocyte proliferation and differentiation and the maintenance of a physiological level of circulating erythrocyte mass. Binds to EPOR leading to EPOR dimerization and JAK2 activation thereby activating specific downstream effectors, including STAT1 and STAT3. The protein is Erythropoietin (EPO) of Felis catus (Cat).